Here is a 110-residue protein sequence, read N- to C-terminus: NADH-quinone oxidoreductase subunit K (110 aa).

3 consecutive transmembrane segments (helical) span residues 7–27 (LGSY…GVFV), 31–51 (IIAI…NFIA), and 73–93 (IFVI…VIAI).

The protein belongs to the complex I subunit 4L family. In terms of assembly, NDH-1 is composed of 14 different subunits. Subunits NuoA, H, J, K, L, M, N constitute the membrane sector of the complex.

The protein resides in the cell membrane. It carries out the reaction a quinone + NADH + 5 H(+)(in) = a quinol + NAD(+) + 4 H(+)(out). In terms of biological role, NDH-1 shuttles electrons from NADH, via FMN and iron-sulfur (Fe-S) centers, to quinones in the respiratory chain. The immediate electron acceptor for the enzyme in this species is believed to be a menaquinone. Couples the redox reaction to proton translocation (for every two electrons transferred, four hydrogen ions are translocated across the cytoplasmic membrane), and thus conserves the redox energy in a proton gradient. This Desulfitobacterium hafniense (strain DSM 10664 / DCB-2) protein is NADH-quinone oxidoreductase subunit K.